Consider the following 317-residue polypeptide: L-lactate dehydrogenase (317 aa).

NAD(+)-binding positions include V16, D37, K42, Y68, and 82–83 (GA). Substrate is bound by residues Q85 and R91. NAD(+) is bound by residues T104, 121–123 (ATN), and S146. Substrate is bound at residue 123–126 (NPVD). Residue 151 to 154 (DTAR) coordinates substrate. Beta-D-fructose 1,6-bisphosphate contacts are provided by R156 and H171. The active-site Proton acceptor is the H178. Phosphotyrosine is present on Y222. T231 is a substrate binding site.

The protein belongs to the LDH/MDH superfamily. LDH family. Homotetramer.

Its subcellular location is the cytoplasm. The enzyme catalyses (S)-lactate + NAD(+) = pyruvate + NADH + H(+). It participates in fermentation; pyruvate fermentation to lactate; (S)-lactate from pyruvate: step 1/1. Its activity is regulated as follows. Allosterically activated by fructose 1,6-bisphosphate (FBP). Functionally, catalyzes the conversion of lactate to pyruvate. The polypeptide is L-lactate dehydrogenase (Corynebacterium efficiens (strain DSM 44549 / YS-314 / AJ 12310 / JCM 11189 / NBRC 100395)).